The following is a 906-amino-acid chain: Eukaryotic translation initiation factor 3 subunit C (906 aa).

A disordered region spans residues 1–22 (MSRFFANGSDSESESSEEEVQA). Acidic residues predominate over residues 11–20 (SESESSEEEV). 4 positions are modified to phosphoserine: Ser-34, Ser-165, Ser-176, and Ser-185. The interval 158–283 (REAPDQESEA…KRPEDDEDGE (126 aa)) is disordered. Acidic residues predominate over residues 162 to 186 (DQESEAEDEEAAQDSDGGDAGDDSD). Positions 195 to 209 (EAAPKVAKTVPAKAA) are enriched in low complexity. Over residues 211–237 (ADDDDSDDSIDWDSDSETETESSDDEN) the composition is skewed to acidic residues. A compositionally biased stretch (basic and acidic residues) spans 242–270 (MRERFLKRTTEKEEKDDDKRKDKRKEQKI). Residues 641-817 (FHMHINLELL…ETVVMHRSEP (177 aa)) enclose the PCI domain. Disordered stretches follow at residues 853–873 (GNMG…NWGG) and 887–906 (QRGR…IDEE). Over residues 894–906 (QQQQQQVQTIDEE) the composition is skewed to low complexity.

The protein belongs to the eIF-3 subunit C family. In terms of assembly, component of the eukaryotic translation initiation factor 3 (eIF-3) complex. The eIF-3 complex interacts with pix.

The protein localises to the cytoplasm. Its function is as follows. Component of the eukaryotic translation initiation factor 3 (eIF-3) complex, which is involved in protein synthesis of a specialized repertoire of mRNAs and, together with other initiation factors, stimulates binding of mRNA and methionyl-tRNAi to the 40S ribosome. The eIF-3 complex specifically targets and initiates translation of a subset of mRNAs involved in cell proliferation. The polypeptide is Eukaryotic translation initiation factor 3 subunit C (Drosophila ananassae (Fruit fly)).